Reading from the N-terminus, the 637-residue chain is Sodium-dependent nutrient amino acid transporter 1 (637 aa).

A compositionally biased stretch (polar residues) spans 1-17 (MELKTMPQNGANAGTQH). The tract at residues 1–39 (MELKTMPQNGANAGTQHNNNSNNKPDNNEKEAQKKEPER) is disordered. At 1–47 (MELKTMPQNGANAGTQHNNNSNNKPDNNEKEAQKKEPERTNWSNGLE) the chain is on the cytoplasmic side. Residues 26–39 (DNNEKEAQKKEPER) are compositionally biased toward basic and acidic residues. 3 helical membrane passes run 48 to 68 (FLMSCISVSVGLGNVWRFPFT), 75 to 95 (GAFLIPYIIVLFLIGKPMYYL), and 128 to 148 (TICIITYYSSLLALTVYYLFV). Residues Asn-181 and Asn-195 are each glycosylated (N-linked (GlcNAc...) asparagine). The next 9 membrane-spanning stretches (helical) occupy residues 225 to 245 (PDWKLTIALFVSWVVIFLVIM), 254 to 274 (AAYFLALFPYVVLFALLGRAV), 303 to 323 (AVVQCFFSLAVGCGPIIMFAS), 337 to 357 (IVTTLDTLTSLLGGITIFAIL), 397 to 417 (LFSALFFFMLFVLGIGSIVAL), 443 to 463 (ICGFLMGLVYVTPGGQWILTL), 470 to 490 (TYVVFILAIFELAGIVWIYGL), 515 to 535 (FFTPIMMIVIFIYSMVTISPI), and 549 to 569 (AGWVLFAVGAAQFPLWGWWYI).

Belongs to the sodium:neurotransmitter symporter (SNF) (TC 2.A.22) family.

It localises to the membrane. Unusual broad substrate spectrum amino acid:sodium cotransporter that promotes absorption of the D isomers of essential amino acids. Neutral amino acids are the preferred substrates, especially methionine and phenylalanine. This is Sodium-dependent nutrient amino acid transporter 1 from Drosophila virilis (Fruit fly).